A 568-amino-acid chain; its full sequence is MPYRMSRQAYAETYGPTVGDRIRLADTELFIQVEQDFTTYGDEVKFGGGKVIRDGMGQSPIANADGAVDLVITNALILDWWGIVKADIGIKDGKIFKIGKAGNPYIQDHVDIIIGPGTEALAGEGMILTAGGIDTHIHFICPQQIEVAIASGITTMIGGGTGPATGTNATTCTPGPWNMYRMLQAADAFPMNLGFLGKGNASQPQGLVEQIFAGAIGLKLHEDWGTTPATIDTCLTVADEYDVQVAIHTDTLNEAGFVEDTIAAFKNRAIHTYHTEGAGGGHAPDIIKVCGQANVLPSSTNPTRPYTVNTLDEHLDMLMVCHHLDPAIAEDVAFAESRIRRETIAAEDILHDLGAFSMIASDSQAMGRVGEVIIRTWQTSHKMKVQRGSLTGDAEADNLRAKRYVAKYTINPAITHGIAQYVGSVEAGKLADLCLWRPAFFGVKPEIVIKGGMIAWSQMGDANASIPTPQPVHMRPMFGSFAGARNATSLTFVSQAALEREIPQQLGLRKSAVAVSGTRQLTKQDMKLNDALPHIEVDSESYEVRADGELLTCEPATVLPMAQRYFLF.

A Urease domain is found at 131–568 (GGIDTHIHFI…LPMAQRYFLF (438 aa)). 3 residues coordinate Ni(2+): His136, His138, and Lys219. Lys219 carries the N6-carboxylysine modification. Residue His221 participates in substrate binding. The Ni(2+) site is built by His248 and His274. His322 acts as the Proton donor in catalysis. Asp362 contacts Ni(2+).

The protein belongs to the metallo-dependent hydrolases superfamily. Urease alpha subunit family. Heterotrimer of UreA (gamma), UreB (beta) and UreC (alpha) subunits. Three heterotrimers associate to form the active enzyme. Ni cation is required as a cofactor. In terms of processing, carboxylation allows a single lysine to coordinate two nickel ions.

The protein localises to the cytoplasm. The enzyme catalyses urea + 2 H2O + H(+) = hydrogencarbonate + 2 NH4(+). The protein operates within nitrogen metabolism; urea degradation; CO(2) and NH(3) from urea (urease route): step 1/1. The polypeptide is Urease subunit alpha (Nostoc sp. (strain PCC 7120 / SAG 25.82 / UTEX 2576)).